Reading from the N-terminus, the 241-residue chain is Trypsin-10 (241 aa).

A signal peptide spans 1-13; the sequence is MKSLIFVLLLGAV. The propeptide at 14–19 is activation peptide; the sequence is FAEEDK. Positions 20-239 constitute a Peptidase S1 domain; sequence IVGGYECTRH…LSGWVRDTMA (220 aa). Disulfide bonds link Cys26–Cys155, Cys44–Cys60, Cys128–Cys228, Cys135–Cys201, Cys166–Cys180, and Cys191–Cys215. Catalysis depends on charge relay system residues His59 and Asp103. The Charge relay system role is filled by Ser195.

Belongs to the peptidase S1 family.

The protein resides in the secreted. The protein localises to the extracellular space. The enzyme catalyses Preferential cleavage: Arg-|-Xaa, Lys-|-Xaa.. The polypeptide is Trypsin-10 (Gadus morhua (Atlantic cod)).